The sequence spans 321 residues: o-succinylbenzoate synthase (321 aa).

Lys-134 serves as the catalytic Proton donor. Mg(2+) contacts are provided by Asp-162, Glu-191, and Asp-214. Lys-236 serves as the catalytic Proton acceptor.

It belongs to the mandelate racemase/muconate lactonizing enzyme family. MenC type 1 subfamily. A divalent metal cation serves as cofactor.

It catalyses the reaction (1R,6R)-6-hydroxy-2-succinyl-cyclohexa-2,4-diene-1-carboxylate = 2-succinylbenzoate + H2O. Its pathway is quinol/quinone metabolism; 1,4-dihydroxy-2-naphthoate biosynthesis; 1,4-dihydroxy-2-naphthoate from chorismate: step 4/7. The protein operates within quinol/quinone metabolism; menaquinone biosynthesis. In terms of biological role, converts 2-succinyl-6-hydroxy-2,4-cyclohexadiene-1-carboxylate (SHCHC) to 2-succinylbenzoate (OSB). This chain is o-succinylbenzoate synthase, found in Klebsiella pneumoniae (strain 342).